Here is a 154-residue protein sequence, read N- to C-terminus: Transcriptional repressor NrdR (154 aa).

A zinc finger lies at 3–34 (CPFCNHGELKVIDSRNAPESNAIKRRRECLRC). In terms of domain architecture, ATP-cone spans 48–138 (VQVLKRDGRY…VYRRFKDVGE (91 aa)).

This sequence belongs to the NrdR family. It depends on Zn(2+) as a cofactor.

Its function is as follows. Negatively regulates transcription of bacterial ribonucleotide reductase nrd genes and operons by binding to NrdR-boxes. The sequence is that of Transcriptional repressor NrdR from Chlamydia trachomatis serovar L2 (strain ATCC VR-902B / DSM 19102 / 434/Bu).